The chain runs to 361 residues: FK506-binding protein 39 kDa (361 aa).

The tract at residues 122–256 (LVDEEDEEEE…PSSPKTRTLK (135 aa)) is disordered. Acidic residues predominate over residues 123–174 (VDEEDEEEEESDEDYDLSPTEEDLVETVSGDEESEEESESEDNSASEEDELD). At Ser192 the chain carries Phosphoserine. Residues 208-227 (QKVEGTPVKEKKVAFAEKLE) are compositionally biased toward basic and acidic residues. At Thr213 the chain carries Phosphothreonine. The span at 241–252 (QASSNAPSSPKT) shows a compositional bias: polar residues. Ser249 is subject to Phosphoserine. Residues 275-361 (GKKVEMRYIG…VFEVKLVRVH (87 aa)) enclose the PPIase FKBP-type domain.

The protein belongs to the FKBP-type PPIase family. FKBP3/4 subfamily.

The protein localises to the nucleus. Its subcellular location is the nucleolus. The catalysed reaction is [protein]-peptidylproline (omega=180) = [protein]-peptidylproline (omega=0). In terms of biological role, PPIase that acts as a histone chaperone. Histone proline isomerase that increases the rate of cis-trans isomerization at prolines on the histone H3 N-terminal tail. Proline isomerization influences H3 methylation thereby regulating gene expression. The sequence is that of FK506-binding protein 39 kDa from Schizosaccharomyces pombe (strain 972 / ATCC 24843) (Fission yeast).